The following is a 360-amino-acid chain: MAAERGAGQQQSQEMMEVDRRVESEESGDEEGKKHSSGIVADLSEQSLKDGEERGEEDPEEEHELPVDMETINLDRDAEDVDLNHYRIGKIEGFEVLKKVKTLCLRQNLIKCIENLEELQSLRELDLYDNQIKKIENLEALTELEILDISFNLLRNIEGVDKLTRLKKLFLVNNKISKIENLSNLHQLQMLELGSNRIRAIENIDTLTNLESLFLGKNKITKLQNLDALTNLTVLSMQSNRLTKIEGLQNLVNLRELYLSHNGIEVIEGLENNNKLTMLDIASNRIKKIENISHLTELQEFWMNDNLLESWSDLDELKGARSLETVYLERNPLQKDPQYRRKVMLALPSVRQIDATFVRF.

The disordered stretch occupies residues 1-64; that stretch reads MAAERGAGQQ…GEEDPEEEHE (64 aa). At Ala2 the chain carries N-acetylalanine. Residues Ser12, Ser24, Ser27, Ser44, and Ser47 each carry the phosphoserine modification. Basic and acidic residues predominate over residues 17 to 34; sequence EVDRRVESEESGDEEGKK. Acidic residues predominate over residues 53-63; it reads ERGEEDPEEEH. 11 LRR repeats span residues 77-98, 99-120, 121-142, 143-164, 165-186, 187-208, 209-230, 231-252, 253-274, 275-296, and 297-318; these read DAED…EVLK, KVKT…EELQ, SLRE…EALT, ELEI…DKLT, RLKK…SNLH, QLQM…DTLT, NLES…DALT, NLTV…QNLV, NLRE…ENNN, KLTM…SHLT, and ELQE…DELK. Ser322 is subject to Phosphoserine. In terms of domain architecture, LRRCT spans 331-360; that stretch reads NPLQKDPQYRRKVMLALPSVRQIDATFVRF.

The protein belongs to the SDS22 family. As to quaternary structure, interacts with PPP1CA, PPP1CB and PPP1CC/PPP1G isoform 1. In terms of tissue distribution, widely expressed.

The protein localises to the nucleus. In terms of biological role, regulatory subunit of protein phosphatase 1. The sequence is that of Protein phosphatase 1 regulatory subunit 7 (PPP1R7) from Homo sapiens (Human).